A 359-amino-acid chain; its full sequence is MAADGKNVLIMAGGTGGHVFPALACAREFQARGYSVHWLGTPRGIENELVPQAGLPLHLIQVSGLRGKGKLSLLKAPFTLIKAVLQARRIIRQLKPVCVLGFGGYVTGPGGVAARLCGVPLVIHEQNARAGTANRLLVPLSARVCEAFPNTFEASDKRRTTGNPVRPELFMDAQRAPLAERRARLLVLGGSLGAEPLNKLLPKALSEVPAGLRPEVFHQAGKQHAPITAERYHEAGVAAQVEPFIKDMAQAYGWADMVVCRAGALTVSELAAAGLPSMLVPLPHAIDDHQTHNAQYLAREGAAFLMPQATTGAAQLAERLNEVLMQPEKLNVMAGTARRLAKPAATSTVVDICLEVAHG.

Residues 15-17, N127, R166, S191, I245, 264-269, and Q290 contribute to the UDP-N-acetyl-alpha-D-glucosamine site; these read TGG and ALTVSE.

Belongs to the glycosyltransferase 28 family. MurG subfamily.

The protein resides in the cell inner membrane. The catalysed reaction is di-trans,octa-cis-undecaprenyl diphospho-N-acetyl-alpha-D-muramoyl-L-alanyl-D-glutamyl-meso-2,6-diaminopimeloyl-D-alanyl-D-alanine + UDP-N-acetyl-alpha-D-glucosamine = di-trans,octa-cis-undecaprenyl diphospho-[N-acetyl-alpha-D-glucosaminyl-(1-&gt;4)]-N-acetyl-alpha-D-muramoyl-L-alanyl-D-glutamyl-meso-2,6-diaminopimeloyl-D-alanyl-D-alanine + UDP + H(+). It participates in cell wall biogenesis; peptidoglycan biosynthesis. Functionally, cell wall formation. Catalyzes the transfer of a GlcNAc subunit on undecaprenyl-pyrophosphoryl-MurNAc-pentapeptide (lipid intermediate I) to form undecaprenyl-pyrophosphoryl-MurNAc-(pentapeptide)GlcNAc (lipid intermediate II). The protein is UDP-N-acetylglucosamine--N-acetylmuramyl-(pentapeptide) pyrophosphoryl-undecaprenol N-acetylglucosamine transferase of Pseudomonas putida (strain GB-1).